The following is a 325-amino-acid chain: Pyruvate dehydrogenase E1 component subunit beta (325 aa).

Glutamate 60 serves as a coordination point for thiamine diphosphate.

As to quaternary structure, heterodimer of an alpha and a beta chain. It depends on thiamine diphosphate as a cofactor.

It carries out the reaction N(6)-[(R)-lipoyl]-L-lysyl-[protein] + pyruvate + H(+) = N(6)-[(R)-S(8)-acetyldihydrolipoyl]-L-lysyl-[protein] + CO2. The pyruvate dehydrogenase complex catalyzes the overall conversion of pyruvate to acetyl-CoA and CO(2). It contains multiple copies of three enzymatic components: pyruvate dehydrogenase (E1), dihydrolipoamide acetyltransferase (E2) and lipoamide dehydrogenase (E3). The protein is Pyruvate dehydrogenase E1 component subunit beta (pdhB) of Staphylococcus aureus (strain Mu50 / ATCC 700699).